A 274-amino-acid chain; its full sequence is Ribose-5-phosphate isomerase (274 aa).

This sequence belongs to the ribose 5-phosphate isomerase family.

It localises to the cytoplasm. The enzyme catalyses aldehydo-D-ribose 5-phosphate = D-ribulose 5-phosphate. Its pathway is carbohydrate degradation; pentose phosphate pathway; D-ribose 5-phosphate from D-ribulose 5-phosphate (non-oxidative stage): step 1/1. The sequence is that of Ribose-5-phosphate isomerase (rki1) from Schizosaccharomyces pombe (strain 972 / ATCC 24843) (Fission yeast).